The chain runs to 228 residues: Prolactin (228 aa).

A signal peptide spans 1–29; sequence MCPKGSSVKGSLLLLLLMSSRFLFKAVES. Cys-33 and Cys-40 are oxidised to a cystine. Phosphoserine is present on residues Ser-55, Ser-63, and Ser-119. 2 disulfide bridges follow: Cys-87-Cys-203 and Cys-220-Cys-228.

It belongs to the somatotropin/prolactin family. As to quaternary structure, interacts with PRLR.

The protein resides in the secreted. In terms of biological role, prolactin acts primarily on the mammary gland by promoting lactation. The protein is Prolactin (PRL) of Monodelphis domestica (Gray short-tailed opossum).